A 282-amino-acid chain; its full sequence is MGFNEQENAFIEWYPRGYGVGFRVKERLFETQTKYQRLELYETEGFGKLLVLDGTVQLVEMGEESYHEPLVHPVMLAHPNPRRVLIIGGGDGGTLREVLRHKTVEKAIMVEIDEMVIEVSRIYMNVARGAFEDPRAELIVSDGVEYLKNTDEKFDVIIVDSTDPVGPAKMLFSEGFFRNAYEKLNDNGLYITQAGSVYLFTNELLDAYRDMGKVFDEVHYFSFPVIGYASPWSFLVGVKGDINFRKVDLQRAKELKLYYYDPERHETLFQMPKYVRELLEKV.

A PABS domain is found at 11-239 (IEWYPRGYGV…SPWSFLVGVK (229 aa)). An S-methyl-5'-thioadenosine-binding site is contributed by Gln-36. Residues His-67 and Asp-91 each coordinate spermidine. S-methyl-5'-thioadenosine contacts are provided by residues Glu-111 and 142–143 (DG). The active-site Proton acceptor is the Asp-160. Spermidine is bound at residue 160 to 163 (DSTD). Position 167 (Pro-167) interacts with S-methyl-5'-thioadenosine.

Belongs to the spermidine/spermine synthase family. Homodimer or homotetramer.

The protein localises to the cytoplasm. The catalysed reaction is S-adenosyl 3-(methylsulfanyl)propylamine + putrescine = S-methyl-5'-thioadenosine + spermidine + H(+). The protein operates within amine and polyamine biosynthesis; spermidine biosynthesis; spermidine from putrescine: step 1/1. Catalyzes the irreversible transfer of a propylamine group from the amino donor S-adenosylmethioninamine (decarboxy-AdoMet) to putrescine (1,4-diaminobutane) to yield spermidine. This Thermococcus onnurineus (strain NA1) protein is Polyamine aminopropyltransferase.